The following is a 236-amino-acid chain: Purine nucleoside phosphorylase DeoD-type (236 aa).

Position 5 (His-5) interacts with a purine D-ribonucleoside. Phosphate-binding positions include Gly-21, Arg-25, Arg-44, and 88 to 91 (RVGT). Residues 180–182 (EME) and 204–205 (SD) each bind a purine D-ribonucleoside. The Proton donor role is filled by Asp-205.

This sequence belongs to the PNP/UDP phosphorylase family. In terms of assembly, homohexamer; trimer of homodimers.

The catalysed reaction is a purine D-ribonucleoside + phosphate = a purine nucleobase + alpha-D-ribose 1-phosphate. The enzyme catalyses a purine 2'-deoxy-D-ribonucleoside + phosphate = a purine nucleobase + 2-deoxy-alpha-D-ribose 1-phosphate. Catalyzes the reversible phosphorolytic breakdown of the N-glycosidic bond in the beta-(deoxy)ribonucleoside molecules, with the formation of the corresponding free purine bases and pentose-1-phosphate. The sequence is that of Purine nucleoside phosphorylase DeoD-type from Shewanella denitrificans (strain OS217 / ATCC BAA-1090 / DSM 15013).